We begin with the raw amino-acid sequence, 394 residues long: Proliferation-associated protein 2G4 (394 aa).

Ser-2 carries the N-acetylserine modification. Ser-2 carries the phosphoserine modification. Residues 2-48 are necessary for nucleolar localization; that stretch reads SGEDEQQEQTIAEDLVVTKYKMGGDIANRVLRSLVEASSSGVSVLSL. The RNA-binding stretch occupies residues 46-54; it reads LSLCEKGDA. Lys-298 is covalently cross-linked (Glycyl lysine isopeptide (Lys-Gly) (interchain with G-Cter in SUMO2)). The necessary for nucleolar localization stretch occupies residues 301-394; the sequence is LLQPFNVLYE…ETLEENEAGD (94 aa). At Ser-335 the chain carries Phosphoserine. The tract at residues 358–394 is disordered; it reads LQSSASRKTQKKKKKKASKTAENATSGETLEENEAGD. The residue at position 361 (Ser-361) is a Phosphoserine; by PKC/PRKCD. Positions 361 to 375 are interaction with RNA; that stretch reads SASRKTQKKKKKKAS. A compositionally biased stretch (basic residues) spans 365-375; sequence KTQKKKKKKAS. Thr-366 and Thr-386 each carry phosphothreonine.

It belongs to the peptidase M24 family. In terms of assembly, isoform 2 interacts with the cytoplasmic domain of non-phosphorylated ERBB3; the interaction requires PKC activity. Interacts with AR. Treatment with HRG leads to dissociation from ERBB3 and increases association with AR. Interacts with NCL/nucleolin. Component of a ribonucleoprotein complex containing at least PA2G4, NCL, TOP1, PABPC2, RPLP0, acetylated histone H1 (HIST1H1A or H1F1), histone H1 2/4, RPL4, RPL8, RPL15, RPL18, RPL18A, RPL21, RPL11, RPL12, RPL28, RPL27, RPLP2 and RPL24. Interacts with HDAC2. Interacts with RB1; the interaction is enhanced upon PA2G4 dephosphorylation. Interacts with AKT1. Isoform 1 and isoform 2 interact with RNF20. Isoform 2 interacts with HUWE1. Interacts with DNAJC21. Post-translationally, phosphorylated on serine and threonine residues. Phosphorylation is enhanced by HRG treatment. Basal phosphorylation is PKC-dependent and HRG-induced phosphorylation is predominantly PKC-independent. Phosphorylation at Ser-361 by PKC/PRKCD regulates its nucleolar localization. In terms of processing, in cancer cells, isoform 2 is polyubiquitinated leading to its proteasomal degradation and phosphorylation by PKC/PRKCD enhances polyubiquitination. In terms of tissue distribution, isoform 2 is undetectable whereas isoform 1 is strongly expressed in cancer cells (at protein level). Isoform 1 and isoform 2 are widely expressed, including heart, brain, lung, pancreas, skeletal muscle, kidney, placenta and liver.

The protein localises to the cytoplasm. Its subcellular location is the nucleus. The protein resides in the nucleolus. Functionally, may play a role in a ERBB3-regulated signal transduction pathway. Seems be involved in growth regulation. Acts a corepressor of the androgen receptor (AR) and is regulated by the ERBB3 ligand neuregulin-1/heregulin (HRG). Inhibits transcription of some E2F1-regulated promoters, probably by recruiting histone acetylase (HAT) activity. Binds RNA. Associates with 28S, 18S and 5.8S mature rRNAs, several rRNA precursors and probably U3 small nucleolar RNA. May be involved in regulation of intermediate and late steps of rRNA processing. May be involved in ribosome assembly. Mediates cap-independent translation of specific viral IRESs (internal ribosomal entry site). Regulates cell proliferation, differentiation, and survival. Isoform 1 suppresses apoptosis whereas isoform 2 promotes cell differentiation. This Homo sapiens (Human) protein is Proliferation-associated protein 2G4 (PA2G4).